The sequence spans 256 residues: MRIDLNADLGEGFGAWTMGEDEALMQLISSANVACGFHAGDPLIMDSTVRRAKALGIDLGAHVGFPDLQGFGRRRMNIELKELCAIVVYQLGALAGIATAAGYRVTHMSFHGALGNMAAADAELAGPLVKAVARFDPQMIISSSSSEAIEQAAQACNLRVATTFLADRAYDENCLLVPRGIAGAVVKDPEQVRARVAQLLQDGTVTTLSGKRVAVNAQSILLHGDTPGAVELARSIRHSIEEQGGVITPVSQLLGS.

Belongs to the LamB/PxpA family. In terms of assembly, forms a complex composed of PxpA, PxpB and PxpC.

The enzyme catalyses 5-oxo-L-proline + ATP + 2 H2O = L-glutamate + ADP + phosphate + H(+). Catalyzes the cleavage of 5-oxoproline to form L-glutamate coupled to the hydrolysis of ATP to ADP and inorganic phosphate. This Pseudomonas syringae pv. tomato (strain ATCC BAA-871 / DC3000) protein is 5-oxoprolinase subunit A 1.